The sequence spans 502 residues: Probable cytosol aminopeptidase (502 aa).

Residues Lys269 and Asp274 each contribute to the Mn(2+) site. The active site involves Lys281. 3 residues coordinate Mn(2+): Asp292, Asp351, and Glu353. Residue Arg355 is part of the active site.

Belongs to the peptidase M17 family. The cofactor is Mn(2+).

The protein localises to the cytoplasm. The catalysed reaction is Release of an N-terminal amino acid, Xaa-|-Yaa-, in which Xaa is preferably Leu, but may be other amino acids including Pro although not Arg or Lys, and Yaa may be Pro. Amino acid amides and methyl esters are also readily hydrolyzed, but rates on arylamides are exceedingly low.. The enzyme catalyses Release of an N-terminal amino acid, preferentially leucine, but not glutamic or aspartic acids.. Functionally, presumably involved in the processing and regular turnover of intracellular proteins. Catalyzes the removal of unsubstituted N-terminal amino acids from various peptides. This chain is Probable cytosol aminopeptidase, found in Shewanella piezotolerans (strain WP3 / JCM 13877).